Reading from the N-terminus, the 419-residue chain is GTPase Obg (419 aa).

The region spanning 1–156 (MRFVDYVSIE…FYLDLQLKVM (156 aa)) is the Obg domain. The region spanning 157–334 (ADIGLVGKPN…LEEKQKKLEI (178 aa)) is the OBG-type G domain. GTP-binding positions include 163–170 (GKPNAGKS), 188–192 (FTTLV), 209–212 (DLPG), 278–281 (NKCD), and 315–317 (NII). 2 residues coordinate Mg(2+): Ser170 and Thr190. One can recognise an OCT domain in the interval 342–419 (IEFNLKAPFL…RIYEFEFHWN (78 aa)).

This sequence belongs to the TRAFAC class OBG-HflX-like GTPase superfamily. OBG GTPase family. As to quaternary structure, monomer. Requires Mg(2+) as cofactor.

It localises to the cytoplasm. An essential GTPase which binds GTP, GDP and possibly (p)ppGpp with moderate affinity, with high nucleotide exchange rates and a fairly low GTP hydrolysis rate. Plays a role in control of the cell cycle, stress response, ribosome biogenesis and in those bacteria that undergo differentiation, in morphogenesis control. This chain is GTPase Obg, found in Mesomycoplasma hyopneumoniae (strain 232) (Mycoplasma hyopneumoniae).